The primary structure comprises 331 residues: HPr kinase/phosphorylase (331 aa).

Residues H153 and K174 contribute to the active site. Residue 168–175 (GKSGLGKS) coordinates ATP. S175 is a Mg(2+) binding site. D192 (proton acceptor; for phosphorylation activity. Proton donor; for dephosphorylation activity) is an active-site residue. The interval 217-226 (MEIRGLGVVD) is important for the catalytic mechanism of both phosphorylation and dephosphorylation. Residue E218 participates in Mg(2+) binding. The active site involves R259. Residues 280-285 (PIFPGK) are important for the catalytic mechanism of dephosphorylation.

It belongs to the HPrK/P family. In terms of assembly, homohexamer. It depends on Mg(2+) as a cofactor.

It carries out the reaction [HPr protein]-L-serine + ATP = [HPr protein]-O-phospho-L-serine + ADP + H(+). The catalysed reaction is [HPr protein]-O-phospho-L-serine + phosphate + H(+) = [HPr protein]-L-serine + diphosphate. Its function is as follows. Catalyzes the ATP- as well as the pyrophosphate-dependent phosphorylation of a specific serine residue in HPr, a phosphocarrier protein of the phosphoenolpyruvate-dependent sugar phosphotransferase system (PTS). HprK/P also catalyzes the pyrophosphate-producing, inorganic phosphate-dependent dephosphorylation (phosphorolysis) of seryl-phosphorylated HPr (P-Ser-HPr). This chain is HPr kinase/phosphorylase, found in Pelodictyon phaeoclathratiforme (strain DSM 5477 / BU-1).